Here is a 198-residue protein sequence, read N- to C-terminus: Leucine-rich melanocyte differentiation-associated protein (198 aa).

LRR repeat units lie at residues 2–22 (EKYL…EGLS), 26–47 (SLEE…PGLP), 48–69 (RLHT…LDHL), and 75–95 (ALEY…VSLE). Residues 96-134 (KDEEDYKRYRCFVLYKLPNLKFLDAQKVTRQEREEALVR) form the LRRCT domain.

In the embryo, expressed in melanoblasts. In the fetus, expressed in melanocytes. Not detected in retinal pigment epithelial cells.

In terms of biological role, required for melanocyte differentiation. This chain is Leucine-rich melanocyte differentiation-associated protein, found in Homo sapiens (Human).